We begin with the raw amino-acid sequence, 347 residues long: Aromatic amino acid aminotransferase (347 aa).

An N6-(pyridoxal phosphate)lysine modification is found at Lys-214.

It belongs to the class-II pyridoxal-phosphate-dependent aminotransferase family. In terms of assembly, homodimer. Requires pyridoxal 5'-phosphate as cofactor.

The catalysed reaction is an aromatic L-alpha-amino acid + 2-oxoglutarate = an aromatic oxo-acid + L-glutamate. Its function is as follows. Aminotransferase that catalyzes the conversion of aromatic amino acids and 2-oxoglutarate into corresponding aromatic oxo acids and L-glutamate. The sequence is that of Aromatic amino acid aminotransferase from Mycobacteroides abscessus (strain ATCC 19977 / DSM 44196 / CCUG 20993 / CIP 104536 / JCM 13569 / NCTC 13031 / TMC 1543 / L948) (Mycobacterium abscessus).